Here is a 417-residue protein sequence, read N- to C-terminus: FK506-binding protein 3 (417 aa).

2 disordered regions span residues 42–129 and 191–307; these read SLDD…LSPE and EGCG…DKPK. Composition is skewed to acidic residues over residues 61-84, 99-120, and 197-222; these read FDDEDDLLADSEEEEEEESEEESE, SEEEDSEEEDSEGEDSDDEFEE, and CACDDDSDYDLTPDEEDILDMEDASD. Basic and acidic residues-rich tracts occupy residues 236-249 and 256-307; these read ANEKRKADEDEPKA and DQKD…DKPK. One can recognise a PPIase FKBP-type domain in the interval 331-417; the sequence is GARVGMRYIG…TFDVKLVSLK (87 aa).

It belongs to the FKBP-type PPIase family. FKBP3/4 subfamily.

It is found in the nucleus. The protein resides in the nucleolus. It catalyses the reaction [protein]-peptidylproline (omega=180) = [protein]-peptidylproline (omega=0). Its activity is regulated as follows. Inhibited by both FK506 and rapamycin. In terms of biological role, PPIases accelerate the folding of proteins. It catalyzes the cis-trans isomerization of proline imidic peptide bonds in oligopeptides. This Eremothecium gossypii (strain ATCC 10895 / CBS 109.51 / FGSC 9923 / NRRL Y-1056) (Yeast) protein is FK506-binding protein 3 (FPR3).